We begin with the raw amino-acid sequence, 258 residues long: Regulatory protein RecX (258 aa).

This sequence belongs to the RecX family.

Its subcellular location is the cytoplasm. Functionally, modulates RecA activity. The chain is Regulatory protein RecX from Streptococcus pneumoniae serotype 19F (strain G54).